Consider the following 144-residue polypeptide: Ribosome-binding factor A (144 aa).

The interval 120 to 144 is disordered; sequence DKRRMAEAGREEDEAAPDDTTEDKA. Positions 129-144 are enriched in acidic residues; it reads REEDEAAPDDTTEDKA.

It belongs to the RbfA family. In terms of assembly, monomer. Binds 30S ribosomal subunits, but not 50S ribosomal subunits or 70S ribosomes.

Its subcellular location is the cytoplasm. Its function is as follows. One of several proteins that assist in the late maturation steps of the functional core of the 30S ribosomal subunit. Associates with free 30S ribosomal subunits (but not with 30S subunits that are part of 70S ribosomes or polysomes). Required for efficient processing of 16S rRNA. May interact with the 5'-terminal helix region of 16S rRNA. In Aeromonas salmonicida (strain A449), this protein is Ribosome-binding factor A.